Reading from the N-terminus, the 452-residue chain is Glycine receptor subunit alpha-2 (452 aa).

The first 27 residues, 1 to 27, serve as a signal peptide directing secretion; it reads MNRQLVNILTALFAFFLGTNHFREAFC. Over 28-256 the chain is Extracellular; that stretch reads KDHDSRSGKH…KFHLERQMGY (229 aa). Asn-72 is a glycosylation site (N-linked (GlcNAc...) asparagine). Arg-99 is a binding site for glycine. Arg-99 provides a ligand contact to strychnine. N-linked (GlcNAc...) asparagine glycosylation occurs at Asn-103. Ser-163 contacts glycine. Cys-172 and Cys-186 are disulfide-bonded. Zn(2+)-binding residues include Glu-226 and Glu-228. The cysteines at positions 232 and 243 are disulfide-linked. Thr-238 serves as a coordination point for glycine. His-249 provides a ligand contact to Zn(2+). The chain crosses the membrane as a helical span at residues 257–278; the sequence is YLIQMYIPSLLIVILSWVSFWI. The Cytoplasmic portion of the chain corresponds to 279–283; sequence NMDAA. The chain crosses the membrane as a helical span at residues 284–304; sequence PARVALGITTVLTMTTQSSGS. At 305-315 the chain is on the extracellular side; that stretch reads RASLPKVSYVK. The chain crosses the membrane as a helical span at residues 316-336; it reads AIDIWMAVCLLFVFAALLEYA. Residues 337–420 are Cytoplasmic-facing; it reads AVNFVSRQHK…FVDRAKRIDT (84 aa). The chain crosses the membrane as a helical span at residues 421-441; the sequence is ISRAAFPLAFLIFNIFYWITY. Topologically, residues 442-452 are extracellular; the sequence is KIIRHEDVHKK.

It belongs to the ligand-gated ion channel (TC 1.A.9) family. Glycine receptor (TC 1.A.9.3) subfamily. GLRA2 sub-subfamily. In terms of assembly, interacts with GLRB. Heteropentamer composed of GLRA2 and GLRB; functional GLRB-GLRA2 heteropentamers contain four GLRA2 subunits and one GLRB subunit, although alternative subunit composition cannot be excluded. Homopentamer (in vitro). Both homopentamers and heteropentamers form functional ion channels, but their characteristics are subtly different.

It localises to the postsynaptic cell membrane. Its subcellular location is the synapse. The protein localises to the cell membrane. The protein resides in the cell projection. The catalysed reaction is chloride(in) = chloride(out). Its activity is regulated as follows. Channel opening is triggered by extracellular glycine. Channel opening is also triggered by taurine and beta-alanine. Inhibited by strychnine. Inhibited by picrotoxin. In terms of biological role, subunit of heteromeric glycine-gated chloride channels. Plays a role in synaptic plasticity. Contributes to the generation of inhibitory postsynaptic currents, and is involved in the down-regulation of neuronal excitability. Plays a role in cellular responses to ethanol. The chain is Glycine receptor subunit alpha-2 from Rattus norvegicus (Rat).